The sequence spans 215 residues: MSKAIVLDSHLKEKGSVELPKRYEGINSHNLYLYVKHYLSSARANTAKSKNRAEVSGGGRKPWAQKGGGRARAGSITSPVFVGGGVSHGATNNRNYNLKINKKQKRLALEYALEEKAQANKLFVVEKIAIKGVVEDNKRKHLTKEANQMFQALEQRDTLFVCMNMDEYTELAFSNLKKCLIIDVSELNAYLLAAFSSVVMEEAAFQHVVQDKTEE.

The interval 46-72 (TAKSKNRAEVSGGGRKPWAQKGGGRAR) is disordered. Positions 56–71 (SGGGRKPWAQKGGGRA) are enriched in gly residues.

This sequence belongs to the universal ribosomal protein uL4 family. As to quaternary structure, part of the 50S ribosomal subunit.

Functionally, one of the primary rRNA binding proteins, this protein initially binds near the 5'-end of the 23S rRNA. It is important during the early stages of 50S assembly. It makes multiple contacts with different domains of the 23S rRNA in the assembled 50S subunit and ribosome. Forms part of the polypeptide exit tunnel. The sequence is that of Large ribosomal subunit protein uL4 from Helicobacter pylori (strain Shi470).